Here is a 94-residue protein sequence, read N- to C-terminus: Small ubiquitin-related modifier 3 (94 aa).

Lys-11 participates in a covalent cross-link: Glycyl lysine isopeptide (Lys-Gly) (interchain with G-Cter in SUMO). In terms of domain architecture, Ubiquitin-like spans 15–92; that stretch reads DHINLKVAGQ…IDVFQQQTGG (78 aa). Gly-92 is covalently cross-linked (Glycyl lysine isopeptide (Gly-Lys) (interchain with K-? in acceptor proteins)). Residues 93-94 constitute a propeptide that is removed on maturation; sequence SC.

It belongs to the ubiquitin family. SUMO subfamily. In terms of assembly, interacts with sae2 and ube2i. Covalently attached to a number of proteins. Polymeric chains can be formed through Lys-11 cross-linking. Post-translationally, cleavage of precursor form by a sentrin-specific protease is necessary for function.

The protein resides in the cytoplasm. It localises to the nucleus. Its subcellular location is the PML body. In terms of biological role, ubiquitin-like protein which can be covalently attached to target lysines either as a monomer or as a lysine-linked polymer. Does not seem to be involved in protein degradation and may function as an antagonist of ubiquitin in the degradation process. Plays a role in a number of cellular processes such as nuclear transport, DNA replication and repair, mitosis and signal transduction. Covalent attachment to its substrates requires prior activation by the E1 complex sae1-sae2 and linkage to the E2 enzyme ube2i. The chain is Small ubiquitin-related modifier 3 (sumo3) from Danio rerio (Zebrafish).